The chain runs to 265 residues: MEALPPVRSSLLGILLQVTRLSVLLVQNRDHLYNFLLLKINLFNHWVSGLAQEARGSCNWQAHLPLGAAACPLGQALWAGLALIQVPVWLVLQGPRLMWAGMWGSTKGLGLALLSAWEQLGLSVAIWTDLFLSCLHGLMLVALLLVVVTWRVCQKSHCFRLGRQLSKALQVNCVVRKLLVQLRRLYWWVETMTALTSWHLAYLITWTTCLASHLLQAAFEHTTQLAEAQEVEPQEVSGSSLLPSLSASSDSESGTVLPEQETPRE.

3 helical membrane passes run 72–92 (PLGQ…WLVL), 130–150 (LFLS…VVTW), and 185–205 (LYWW…YLIT). The disordered stretch occupies residues 229-265 (QEVEPQEVSGSSLLPSLSASSDSESGTVLPEQETPRE). Low complexity predominate over residues 237 to 253 (SGSSLLPSLSASSDSES).

It localises to the membrane. This chain is Transmembrane protein 270, found in Homo sapiens (Human).